Reading from the N-terminus, the 311-residue chain is 2-methoxy-6-polyprenyl-1,4-benzoquinol methylase, mitochondrial (311 aa).

A mitochondrion-targeting transit peptide spans 1–29 (MAAGLCPGRALLSRRGGALWALLGTARGR). S-adenosyl-L-methionine is bound by residues threonine 100, aspartate 155, and 183 to 184 (NA).

The protein belongs to the class I-like SAM-binding methyltransferase superfamily. MenG/UbiE family. In terms of assembly, component of a multi-subunit COQ enzyme complex, composed of at least COQ3, COQ4, COQ5, COQ6, COQ7 and COQ9.

It is found in the mitochondrion inner membrane. It catalyses the reaction a 2-methoxy-6-(all-trans-polyprenyl)benzene-1,4-diol + S-adenosyl-L-methionine = a 5-methoxy-2-methyl-3-(all-trans-polyprenyl)benzene-1,4-diol + S-adenosyl-L-homocysteine + H(+). The protein operates within cofactor biosynthesis; ubiquinone biosynthesis. In terms of biological role, methyltransferase required for the conversion of 2-polyprenyl-6-methoxy-1,4-benzoquinol (DDMQH2) to 2-polyprenyl-3-methyl-6-methoxy-1,4-benzoquinol (DMQH2). In Gallus gallus (Chicken), this protein is 2-methoxy-6-polyprenyl-1,4-benzoquinol methylase, mitochondrial.